Reading from the N-terminus, the 176-residue chain is RING-H2 finger protein ATL73 (176 aa).

Residues 1–16 (MARFLLATQATPTISA) form the signal peptide. A helical membrane pass occupies residues 42–62 (VIILAALLCALICALGINSVL). Residues 113-155 (CLICLGDFVEGETVRVLPKCNHGFHVKCIDTWLLSHSSCPTCR) form an RING-type; atypical zinc finger.

Belongs to the RING-type zinc finger family. ATL subfamily.

The protein localises to the membrane. The catalysed reaction is S-ubiquitinyl-[E2 ubiquitin-conjugating enzyme]-L-cysteine + [acceptor protein]-L-lysine = [E2 ubiquitin-conjugating enzyme]-L-cysteine + N(6)-ubiquitinyl-[acceptor protein]-L-lysine.. It participates in protein modification; protein ubiquitination. This Arabidopsis thaliana (Mouse-ear cress) protein is RING-H2 finger protein ATL73 (ATL73).